The sequence spans 164 residues: Transcriptional repressor NrdR (164 aa).

Residues 3–34 (CPKCNYNKSSVVDSRQAEDGNTIRRRRECESC) fold into a zinc finger. Positions 49-139 (LLVIKKDGTR…VYKSFKDLDE (91 aa)) constitute an ATP-cone domain.

This sequence belongs to the NrdR family. Zn(2+) serves as cofactor.

Functionally, negatively regulates transcription of bacterial ribonucleotide reductase nrd genes and operons by binding to NrdR-boxes. This Streptococcus equi subsp. zooepidemicus (strain H70) protein is Transcriptional repressor NrdR.